A 268-amino-acid chain; its full sequence is 4-hydroxy-tetrahydrodipicolinate reductase (268 aa).

NAD(+) contacts are provided by residues Gly7–Met12 and Glu33. Arg34 contributes to the NADP(+) binding site. Residues Gly97–Thr99 and Ser121–Met124 contribute to the NAD(+) site. His155 serves as the catalytic Proton donor/acceptor. His156 is a binding site for (S)-2,3,4,5-tetrahydrodipicolinate. Lys159 functions as the Proton donor in the catalytic mechanism. Gly165–Thr166 contacts (S)-2,3,4,5-tetrahydrodipicolinate.

The protein belongs to the DapB family.

The protein localises to the cytoplasm. It catalyses the reaction (S)-2,3,4,5-tetrahydrodipicolinate + NAD(+) + H2O = (2S,4S)-4-hydroxy-2,3,4,5-tetrahydrodipicolinate + NADH + H(+). It carries out the reaction (S)-2,3,4,5-tetrahydrodipicolinate + NADP(+) + H2O = (2S,4S)-4-hydroxy-2,3,4,5-tetrahydrodipicolinate + NADPH + H(+). The protein operates within amino-acid biosynthesis; L-lysine biosynthesis via DAP pathway; (S)-tetrahydrodipicolinate from L-aspartate: step 4/4. In terms of biological role, catalyzes the conversion of 4-hydroxy-tetrahydrodipicolinate (HTPA) to tetrahydrodipicolinate. The sequence is that of 4-hydroxy-tetrahydrodipicolinate reductase from Brucella abortus (strain 2308).